The following is a 247-amino-acid chain: Probable transcriptional regulatory protein lpg1286 (247 aa).

It belongs to the TACO1 family.

The protein resides in the cytoplasm. The sequence is that of Probable transcriptional regulatory protein lpg1286 from Legionella pneumophila subsp. pneumophila (strain Philadelphia 1 / ATCC 33152 / DSM 7513).